A 319-amino-acid chain; its full sequence is 4-hydroxy-3-methylbut-2-enyl diphosphate reductase (319 aa).

C12 contributes to the [4Fe-4S] cluster binding site. (2E)-4-hydroxy-3-methylbut-2-enyl diphosphate-binding residues include H41 and H74. Dimethylallyl diphosphate is bound by residues H41 and H74. Positions 41 and 74 each coordinate isopentenyl diphosphate. [4Fe-4S] cluster is bound at residue C97. (2E)-4-hydroxy-3-methylbut-2-enyl diphosphate is bound at residue H125. H125 contributes to the dimethylallyl diphosphate binding site. H125 lines the isopentenyl diphosphate pocket. E127 serves as the catalytic Proton donor. A (2E)-4-hydroxy-3-methylbut-2-enyl diphosphate-binding site is contributed by T168. C198 contributes to the [4Fe-4S] cluster binding site. S226, S227, N228, and S270 together coordinate (2E)-4-hydroxy-3-methylbut-2-enyl diphosphate. The dimethylallyl diphosphate site is built by S226, S227, N228, and S270. S226, S227, N228, and S270 together coordinate isopentenyl diphosphate.

This sequence belongs to the IspH family. In terms of assembly, homodimer. Requires [4Fe-4S] cluster as cofactor.

It carries out the reaction isopentenyl diphosphate + 2 oxidized [2Fe-2S]-[ferredoxin] + H2O = (2E)-4-hydroxy-3-methylbut-2-enyl diphosphate + 2 reduced [2Fe-2S]-[ferredoxin] + 2 H(+). The catalysed reaction is dimethylallyl diphosphate + 2 oxidized [2Fe-2S]-[ferredoxin] + H2O = (2E)-4-hydroxy-3-methylbut-2-enyl diphosphate + 2 reduced [2Fe-2S]-[ferredoxin] + 2 H(+). Its pathway is isoprenoid biosynthesis; dimethylallyl diphosphate biosynthesis; dimethylallyl diphosphate from (2E)-4-hydroxy-3-methylbutenyl diphosphate: step 1/1. It participates in isoprenoid biosynthesis; isopentenyl diphosphate biosynthesis via DXP pathway; isopentenyl diphosphate from 1-deoxy-D-xylulose 5-phosphate: step 6/6. Functionally, catalyzes the conversion of 1-hydroxy-2-methyl-2-(E)-butenyl 4-diphosphate (HMBPP) into a mixture of isopentenyl diphosphate (IPP) and dimethylallyl diphosphate (DMAPP). Acts in the terminal step of the DOXP/MEP pathway for isoprenoid precursor biosynthesis. The chain is 4-hydroxy-3-methylbut-2-enyl diphosphate reductase from Hamiltonella defensa subsp. Acyrthosiphon pisum (strain 5AT).